The chain runs to 200 residues: Probable GTP-binding protein EngB (200 aa).

In terms of domain architecture, EngB-type G spans 25–199; that stretch reads SGYEVAFAGR…ISLLDRWYEW (175 aa). GTP is bound by residues 33 to 40, 60 to 64, 78 to 81, 145 to 148, and 178 to 180; these read GRSNAGKS, GRTQL, DLPG, TKAD, and FSS. Positions 40 and 62 each coordinate Mg(2+).

It belongs to the TRAFAC class TrmE-Era-EngA-EngB-Septin-like GTPase superfamily. EngB GTPase family. It depends on Mg(2+) as a cofactor.

In terms of biological role, necessary for normal cell division and for the maintenance of normal septation. This chain is Probable GTP-binding protein EngB, found in Legionella pneumophila (strain Corby).